We begin with the raw amino-acid sequence, 281 residues long: Protein ZAR1-like 1.S (281 aa).

The segment at 183–267 (QKYGFFQCKD…QDLCGRCKGQ (85 aa)) adopts a 3CxxC-type zinc-finger fold.

This sequence belongs to the ZAR1 family. As to quaternary structure, component of a cytoplasmic ribonucleoprotein complex together with eif4enif1/4E-T and cpeb1. As to expression, expressed in oocytes.

The protein localises to the cytoplasm. The protein resides in the cytoplasmic ribonucleoprotein granule. Functionally, mRNA-binding protein required for maternal mRNA storage, translation and degradation during oocyte maturation. Controls timing of meiosis during oogenesis. Probably promotes formation of some phase-separated membraneless compartment that stores maternal mRNAs in oocytes: acts by undergoing liquid-liquid phase separation upon binding to maternal mRNAs. Binds to the 3'-UTR of maternal mRNAs, inhibiting their translation. This is Protein ZAR1-like 1.S from Xenopus laevis (African clawed frog).